A 788-amino-acid chain; its full sequence is Glycerol-3-phosphate acyltransferase (788 aa).

Residues 104–135 form a disordered region; it reads LLPGRDPYHPNPRQQRRILRSDPQRARVMAGE. The short motif at 271–276 is the HXXXXD motif element; it reads SHRSYI.

Belongs to the GPAT/DAPAT family.

The protein localises to the cell membrane. It carries out the reaction sn-glycerol 3-phosphate + an acyl-CoA = a 1-acyl-sn-glycero-3-phosphate + CoA. The protein operates within phospholipid metabolism; CDP-diacylglycerol biosynthesis; CDP-diacylglycerol from sn-glycerol 3-phosphate: step 1/3. The sequence is that of Glycerol-3-phosphate acyltransferase from Mycobacterium marinum (strain ATCC BAA-535 / M).